Here is an 89-residue protein sequence, read N- to C-terminus: NADH-ubiquinone oxidoreductase chain 4L (89 aa).

A run of 3 helical transmembrane segments spans residues 1–21 (MNIT…NRKN), 22–42 (IILM…LILV), and 57–77 (IYII…LVAF).

It belongs to the complex I subunit 4L family.

Its subcellular location is the mitochondrion membrane. The enzyme catalyses a ubiquinone + NADH + 5 H(+)(in) = a ubiquinol + NAD(+) + 4 H(+)(out). In terms of biological role, core subunit of the mitochondrial membrane respiratory chain NADH dehydrogenase (Complex I) that is believed to belong to the minimal assembly required for catalysis. Complex I functions in the transfer of electrons from NADH to the respiratory chain. The immediate electron acceptor for the enzyme is believed to be ubiquinone. The protein is NADH-ubiquinone oxidoreductase chain 4L (ND4L) of Podospora anserina (strain S / ATCC MYA-4624 / DSM 980 / FGSC 10383) (Pleurage anserina).